A 304-amino-acid chain; its full sequence is Glycine--tRNA ligase alpha subunit (304 aa).

Belongs to the class-II aminoacyl-tRNA synthetase family. As to quaternary structure, tetramer of two alpha and two beta subunits.

The protein localises to the cytoplasm. The catalysed reaction is tRNA(Gly) + glycine + ATP = glycyl-tRNA(Gly) + AMP + diphosphate. The chain is Glycine--tRNA ligase alpha subunit from Yersinia enterocolitica serotype O:8 / biotype 1B (strain NCTC 13174 / 8081).